The following is a 237-amino-acid chain: MSTPFYVSPEQLMKDKADYARKGIARGRAVVVLAHADGIAFVSENASRALHKISEIYDRVAFAAVGKYNEFENLRVAGVRYADVRGYSYDRSDVTARGLANAYAQTLGAIFTTESKPYEVELVVAEVGRRPETDQIYRLTYDGSVADEHGFVAMGGSADQISAKLRERWHAGLTLAEALRLAVEALGSDAAAEAAGTGPREIAPDHLEVAVLDRTRERRTFRRLSGPVLAGLLAGTG.

Belongs to the peptidase T1A family. The 20S proteasome core is composed of 14 alpha and 14 beta subunits that assemble into four stacked heptameric rings, resulting in a barrel-shaped structure. The two inner rings, each composed of seven catalytic beta subunits, are sandwiched by two outer rings, each composed of seven alpha subunits. The catalytic chamber with the active sites is on the inside of the barrel. Has a gated structure, the ends of the cylinder being occluded by the N-termini of the alpha-subunits. Is capped by the proteasome-associated ATPase, ARC.

Its subcellular location is the cytoplasm. The protein operates within protein degradation; proteasomal Pup-dependent pathway. Its activity is regulated as follows. The formation of the proteasomal ATPase ARC-20S proteasome complex, likely via the docking of the C-termini of ARC into the intersubunit pockets in the alpha-rings, may trigger opening of the gate for substrate entry. Interconversion between the open-gate and close-gate conformations leads to a dynamic regulation of the 20S proteasome proteolysis activity. Functionally, component of the proteasome core, a large protease complex with broad specificity involved in protein degradation. The polypeptide is Proteasome subunit alpha (Kineococcus radiotolerans (strain ATCC BAA-149 / DSM 14245 / SRS30216)).